The sequence spans 121 residues: Small ribosomal subunit protein uS13 (121 aa).

The disordered stretch occupies residues 94 to 121; that stretch reads GLPVRGQNTKNNARTRKGPRRTVANKKK. Positions 106–121 are enriched in basic residues; that stretch reads ARTRKGPRRTVANKKK.

The protein belongs to the universal ribosomal protein uS13 family. As to quaternary structure, part of the 30S ribosomal subunit. Forms a loose heterodimer with protein S19. Forms two bridges to the 50S subunit in the 70S ribosome.

Functionally, located at the top of the head of the 30S subunit, it contacts several helices of the 16S rRNA. In the 70S ribosome it contacts the 23S rRNA (bridge B1a) and protein L5 of the 50S subunit (bridge B1b), connecting the 2 subunits; these bridges are implicated in subunit movement. Contacts the tRNAs in the A and P-sites. This Anoxybacillus flavithermus (strain DSM 21510 / WK1) protein is Small ribosomal subunit protein uS13.